We begin with the raw amino-acid sequence, 105 residues long: UPF0251 protein AF_0666 (105 aa).

The protein belongs to the UPF0251 family.

The sequence is that of UPF0251 protein AF_0666 from Archaeoglobus fulgidus (strain ATCC 49558 / DSM 4304 / JCM 9628 / NBRC 100126 / VC-16).